We begin with the raw amino-acid sequence, 486 residues long: Malonate-semialdehyde dehydrogenase (486 aa).

NAD(+)-binding residues include Phe154, Lys178, Glu181, Arg182, and Ser231. The active-site Nucleophile is Cys286. Glu386 contacts NAD(+).

It belongs to the aldehyde dehydrogenase family. IolA subfamily. As to quaternary structure, homotetramer.

It catalyses the reaction 3-oxopropanoate + NAD(+) + CoA + H2O = hydrogencarbonate + acetyl-CoA + NADH + H(+). The enzyme catalyses 2-methyl-3-oxopropanoate + NAD(+) + CoA + H2O = propanoyl-CoA + hydrogencarbonate + NADH + H(+). The protein operates within polyol metabolism; myo-inositol degradation into acetyl-CoA; acetyl-CoA from myo-inositol: step 7/7. Its function is as follows. Catalyzes the oxidation of malonate semialdehyde (MSA) and methylmalonate semialdehyde (MMSA) into acetyl-CoA and propanoyl-CoA, respectively. Is involved in a myo-inositol catabolic pathway. Bicarbonate, and not CO2, is the end-product of the enzymatic reaction. In Bacillus cereus (strain AH187), this protein is Malonate-semialdehyde dehydrogenase.